A 525-amino-acid chain; its full sequence is Cytochrome P450 4V2 (525 aa).

Residues 14–34 (LLWGAASAVSLAGATILISIF) form a helical membrane-spanning segment. Residues E329 and C467 each contribute to the heme site.

It belongs to the cytochrome P450 family. The cofactor is heme.

Its subcellular location is the endoplasmic reticulum membrane. The enzyme catalyses dodecanoate + reduced [NADPH--hemoprotein reductase] + O2 = 12-hydroxydodecanoate + oxidized [NADPH--hemoprotein reductase] + H2O + H(+). It catalyses the reaction tetradecanoate + reduced [NADPH--hemoprotein reductase] + O2 = 14-hydroxytetradecanoate + oxidized [NADPH--hemoprotein reductase] + H2O + H(+). The catalysed reaction is hexadecanoate + reduced [NADPH--hemoprotein reductase] + O2 = 16-hydroxyhexadecanoate + oxidized [NADPH--hemoprotein reductase] + H2O + H(+). It carries out the reaction (5Z,8Z,11Z,14Z,17Z)-eicosapentaenoate + reduced [NADPH--hemoprotein reductase] + O2 = 20-hydroxy-(5Z,8Z,11Z,14Z,17Z)-eicosapentaenoate + oxidized [NADPH--hemoprotein reductase] + H2O + H(+). The enzyme catalyses (4Z,7Z,10Z,13Z,16Z,19Z)-docosahexaenoate + reduced [NADPH--hemoprotein reductase] + O2 = 22-hydroxy-(4Z,7Z,10Z,13Z,16Z,19Z)-docosahexaenoate + oxidized [NADPH--hemoprotein reductase] + H2O + H(+). The protein operates within lipid metabolism; fatty acid metabolism. Its activity is regulated as follows. Inhibited by N-hydroxy-N'-(4-n-butyl-2-methylphenyl formamidine)(HET0016) with an IC(50) of 38 nM. In terms of biological role, a cytochrome P450 monooxygenase involved in fatty acid metabolism in the eye. Catalyzes the omega-hydroxylation of polyunsaturated fatty acids (PUFAs) docosahexaenoate (DHA) and its precursor eicosapentaenoate (EPA), and may contribute to the homeostasis of these retinal PUFAs. Omega hydroxylates saturated fatty acids such as laurate, myristate and palmitate, the catalytic efficiency decreasing in the following order: myristate &gt; laurate &gt; palmitate (C14&gt;C12&gt;C16). Mechanistically, uses molecular oxygen inserting one oxygen atom into a substrate, and reducing the second into a water molecule, with two electrons provided by NADPH via cytochrome P450 reductase (CPR; NADPH-ferrihemoprotein reductase). This is Cytochrome P450 4V2 (Cyp4v2) from Mus musculus (Mouse).